We begin with the raw amino-acid sequence, 353 residues long: Iron(III) enterobactin esterase (353 aa).

Belongs to the Fes family.

Its subcellular location is the cytoplasm. The catalysed reaction is Fe(III)-enterobactin + 3 H2O + H(+) = Fe(III)-[N-(2,3-dihydroxybenzoyl)-L-serine] + 2 N-(2,3-dihydroxybenzoyl)-L-serine. The enzyme catalyses Fe(III)-enterobactin + H2O = Fe(III)-[N-(2,3-dihydroxybenzoyl)-L-serine]3 + H(+). It carries out the reaction Fe(III)-[N-(2,3-dihydroxybenzoyl)-L-serine]3 + H2O + H(+) = Fe(III)-[N-(2,3-dihydroxybenzoyl)-L-serine]2 + N-(2,3-dihydroxybenzoyl)-L-serine. It catalyses the reaction Fe(III)-[N-(2,3-dihydroxybenzoyl)-L-serine]2 + H2O + H(+) = Fe(III)-[N-(2,3-dihydroxybenzoyl)-L-serine] + N-(2,3-dihydroxybenzoyl)-L-serine. Functionally, catalyzes the hydrolysis of ferric enterobactin (Fe-Ent). Is responsible for the release of iron from ferric enterobactin. In Yersinia enterocolitica, this protein is Iron(III) enterobactin esterase.